A 234-amino-acid chain; its full sequence is Nuclear transcription factor Y subunit C-1 (234 aa).

2 disordered regions span residues 1 to 20 and 205 to 234; these read MDTNNQQPPPSAAGIPPPPP and SVWQTSTGTGDDVSYGSGGSSGQGNLDGQG. Over residues 7–20 the composition is skewed to pro residues; the sequence is QPPPSAAGIPPPPP. Residues 209–219 are compositionally biased toward low complexity; it reads TSTGTGDDVSY. Positions 220-234 are enriched in gly residues; sequence GSGGSSGQGNLDGQG.

This sequence belongs to the NFYC/HAP5 subunit family. As to quaternary structure, heterotrimeric transcription factor composed of three components, NF-YA, NF-YB and NF-YC. NF-YB and NF-YC must interact and dimerize for NF-YA association and DNA binding. As to expression, ubiquitous. Present in etiolated seedlings.

It localises to the nucleus. Functionally, stimulates the transcription of various genes by recognizing and binding to a CCAAT motif in promoters. This Arabidopsis thaliana (Mouse-ear cress) protein is Nuclear transcription factor Y subunit C-1 (NFYC1).